The chain runs to 202 residues: LexA repressor (202 aa).

The segment at residues R28–K48 is a DNA-binding region (H-T-H motif). Active-site for autocatalytic cleavage activity residues include S119 and K156.

This sequence belongs to the peptidase S24 family. In terms of assembly, homodimer.

The catalysed reaction is Hydrolysis of Ala-|-Gly bond in repressor LexA.. Its function is as follows. Represses a number of genes involved in the response to DNA damage (SOS response), including recA and lexA. Binds to the 16 bp palindromic sequence 5'-CTGTATATATATACAG-3'. In the presence of single-stranded DNA, RecA interacts with LexA causing an autocatalytic cleavage which disrupts the DNA-binding part of LexA, leading to derepression of the SOS regulon and eventually DNA repair. The protein is LexA repressor of Klebsiella pneumoniae subsp. pneumoniae (strain ATCC 700721 / MGH 78578).